The sequence spans 178 residues: Interleukin-10 (178 aa).

A signal peptide spans 1 to 18; that stretch reads MHSSALLCCLVLLTGVRA. Intrachain disulfides connect C30–C126 and C80–C132. N-linked (GlcNAc...) asparagine glycosylation is present at N134.

The protein belongs to the IL-10 family. Homodimer. Interacts with IL10RA and IL10RB.

The protein resides in the secreted. Functionally, major immune regulatory cytokine that acts on many cells of the immune system where it has profound anti-inflammatory functions, limiting excessive tissue disruption caused by inflammation. Mechanistically, IL10 binds to its heterotetrameric receptor comprising IL10RA and IL10RB leading to JAK1 and STAT2-mediated phosphorylation of STAT3. In turn, STAT3 translocates to the nucleus where it drives expression of anti-inflammatory mediators. Targets antigen-presenting cells (APCs) such as macrophages and monocytes and inhibits their release of pro-inflammatory cytokines including granulocyte-macrophage colony-stimulating factor /GM-CSF, granulocyte colony-stimulating factor/G-CSF, IL-1 alpha, IL-1 beta, IL-6, IL-8 and TNF-alpha. Also interferes with antigen presentation by reducing the expression of MHC-class II and co-stimulatory molecules, thereby inhibiting their ability to induce T cell activation. In addition, controls the inflammatory response of macrophages by reprogramming essential metabolic pathways including mTOR signaling. In Pan troglodytes (Chimpanzee), this protein is Interleukin-10 (IL10).